The primary structure comprises 218 residues: N-(5'-phosphoribosyl)anthranilate isomerase (218 aa).

Belongs to the TrpF family.

The catalysed reaction is N-(5-phospho-beta-D-ribosyl)anthranilate = 1-(2-carboxyphenylamino)-1-deoxy-D-ribulose 5-phosphate. It functions in the pathway amino-acid biosynthesis; L-tryptophan biosynthesis; L-tryptophan from chorismate: step 3/5. The polypeptide is N-(5'-phosphoribosyl)anthranilate isomerase (Acetivibrio thermocellus (strain ATCC 27405 / DSM 1237 / JCM 9322 / NBRC 103400 / NCIMB 10682 / NRRL B-4536 / VPI 7372) (Clostridium thermocellum)).